The following is a 372-amino-acid chain: Probable leucine aminopeptidase MCYG_08380 (372 aa).

Positions 1–19 (MKVSVLAAVAAFAAATAIA) are cleaved as a signal peptide. N-linked (GlcNAc...) asparagine glycosylation occurs at Asn96. Residues His175 and Asp194 each coordinate Zn(2+). 2 N-linked (GlcNAc...) asparagine glycosylation sites follow: Asn195 and Asn219. Residues Glu233 and Asp260 each coordinate Zn(2+). Cys305 and Cys309 are oxidised to a cystine. His338 is a Zn(2+) binding site.

This sequence belongs to the peptidase M28 family. M28E subfamily. In terms of assembly, monomer. Requires Zn(2+) as cofactor.

The protein resides in the secreted. Its function is as follows. Probable extracellular aminopeptidase which contributes to pathogenicity. The protein is Probable leucine aminopeptidase MCYG_08380 of Arthroderma otae (strain ATCC MYA-4605 / CBS 113480) (Microsporum canis).